A 577-amino-acid polypeptide reads, in one-letter code: MLLEFADLDNWVKKRGSILFKKFKYEPFTLEEADKALKEEGIEAENTKELLSILRRKEIIIAKKDPKDKRKRLYQFVKSAKKPTKDNLIRNLKYCADLIRTSVDYKVLLVFLFYKAISDKYLALVEKFVSEGYSKTQAYLMANRSYLTLYDEDEGKLYVWHEIVKSRETIMELANALNKIANLNDNLKDLSKLVEVLGLIGFINEDNMHILEELVRVYNEMDFSEIDYDAIGDAYQWILSYFAPQKCKEGEVYTPVEVVRLIVNLLDIEKDSEVLDPACGSGTMLIESYRYVKDNYGGEIYLYGQERNEIMAILAKLNLILHGVDSEEYEIYIGDSLKNPKIWRGEVDYTIANPPWNLDGYNEDVLKENPDVRRIYNTFVRGGYPPKQSADWAWVQLMLYFARKKVGIVLDSGALFRGGKEKKIRKEIVEKDLIEAIILLPEKLFYNVTAPGIVMILNKNKPEERKGKILFINASLEFEKHPEVRRLNRLGEENIDKIVDVYENWEDIEGFSRVVDLEEIRKNDYNLNVSLYVFPVEEKEDIDLRKELEEFKEIEKKEKEVLDEVIGYVEGILRAGS.

S-adenosyl-L-methionine-binding positions include Glu-251–Val-256, Ser-281–Thr-283, Glu-306, and Asp-335–Ser-336.

This sequence belongs to the N4/N6-methyltransferase family. As to quaternary structure, the type I restriction/modification system is composed of three polypeptides R, M and S.

The enzyme catalyses a 2'-deoxyadenosine in DNA + S-adenosyl-L-methionine = an N(6)-methyl-2'-deoxyadenosine in DNA + S-adenosyl-L-homocysteine + H(+). Its function is as follows. The subtype gamma methyltransferase (M) subunit of a type I restriction enzyme. The M and S subunits together form a methyltransferase (MTase) that methylates A-3 on the top and bottom strands of the sequence 5'-CAAN(7)TGG-3'. In the presence of the R subunit the complex can also act as an endonuclease, binding to the same target sequence but cutting the DNA some distance from this site. Whether the DNA is cut or modified depends on the methylation state of the target sequence. When the target site is unmodified, the DNA is cut. When the target site is hemimethylated, the complex acts as a maintenance MTase modifying the DNA so that both strands become methylated. After locating a non-methylated recognition site, the enzyme complex serves as a molecular motor that translocates DNA in an ATP-dependent manner until a collision occurs that triggers cleavage. The chain is Type I restriction enzyme MjaVII methylase subunit from Methanocaldococcus jannaschii (strain ATCC 43067 / DSM 2661 / JAL-1 / JCM 10045 / NBRC 100440) (Methanococcus jannaschii).